The primary structure comprises 415 residues: Alpha-2Db adrenergic receptor (415 aa).

At 1-33 the chain is on the extracellular side; the sequence is MDLSTITFLLPNSSEDTNGTSAPRLPPHSQCAS. N-linked (GlcNAc...) asparagine glycosylation is found at asparagine 12 and asparagine 18. A helical transmembrane segment spans residues 34–58; that stretch reads VLIVLVVTVIILVTIVGNVLVVVAV. Topologically, residues 59-70 are cytoplasmic; it reads FTSRALRAPQNL. Residues 71-96 form a helical membrane-spanning segment; sequence FLVSLAAADILVATLVIPFSLANEVM. Topologically, residues 97 to 106 are extracellular; the sequence is GYWYLGSTWC. The cysteines at positions 106 and 179 are disulfide-linked. A helical transmembrane segment spans residues 107-129; sequence AFYLALDVLFCTSSIVHLCAISL. Topologically, residues 130–150 are cytoplasmic; the sequence is DRYWSVTKAVSYNLKRTPRRI. A helical transmembrane segment spans residues 151-173; that stretch reads KIMITVVWVISAVISFPPLLMTK. At 174–184 the chain is on the extracellular side; the sequence is HDELECLLNNE. Asparagine 183 carries an N-linked (GlcNAc...) asparagine glycan. The helical transmembrane segment at 185–208 threads the bilayer; the sequence is TWYILSSCIVSFFAPGLIMILVYC. Residues 209–339 lie on the Cytoplasmic side of the membrane; that stretch reads RIYRVAKQRA…QMREKRFTFV (131 aa). Residues 234–299 are disordered; the sequence is QSETCFVRKG…EGAQSCPKPN (66 aa). A compositionally biased stretch (basic residues) spans 276–286; it reads NRHRNSRFAKS. The helical transmembrane segment at 340–363 threads the bilayer; that stretch reads LAVVMGVFVLCWFPFFFTYSLHAI. Residues 364-376 lie on the Extracellular side of the membrane; that stretch reads CRKSCTIPDSLFN. Residues 377–397 traverse the membrane as a helical segment; it reads LFFWIGYCNSSVNPIIYTIFN. Residues 398 to 415 are Cytoplasmic-facing; that stretch reads RDFRKAFKKIMCRHSTRT.

Belongs to the G-protein coupled receptor 1 family. Adrenergic receptor subfamily. ADRA2D sub-subfamily.

It is found in the cell membrane. Its function is as follows. Alpha-2 adrenergic receptors mediate the catecholamine-induced inhibition of adenylate cyclase through the action of G proteins. The order of potency for this receptor is dexmedetomidine &gt; norepinephrine = epinephrine &gt; oxymetazoline. The protein is Alpha-2Db adrenergic receptor (adra2db) of Danio rerio (Zebrafish).